The sequence spans 302 residues: Glutaminase (302 aa).

The substrate site is built by serine 61, asparagine 111, glutamate 155, asparagine 162, tyrosine 186, tyrosine 238, and valine 256.

This sequence belongs to the glutaminase family. Homotetramer.

The catalysed reaction is L-glutamine + H2O = L-glutamate + NH4(+). In Ectopseudomonas mendocina (strain ymp) (Pseudomonas mendocina), this protein is Glutaminase.